We begin with the raw amino-acid sequence, 173 residues long: Tumor necrosis factor ligand superfamily member 18 (173 aa).

The Cytoplasmic portion of the chain corresponds to M1 to S20. Residues W21 to Y41 traverse the membrane as a helical; Signal-anchor for type II membrane protein segment. The region spanning I40–M166 is the THD domain. The Extracellular portion of the chain corresponds to T42–S173. A disulfide bridge connects residues C52 and C72. A glycan (N-linked (GlcNAc...) asparagine) is linked at N74.

Belongs to the tumor necrosis factor family. In terms of assembly, homotrimer. Homodimer. N-glycosylated. Detected in immature and mature dendritic cells and in macrophages (at protein level). Detected in spleen, lung, heart, thymus, monocytes, macrophages, B-cells and dendritic cells.

Its subcellular location is the cell membrane. Functionally, cytokine that binds to TNFRSF18/AITR/GITR. Regulates T-cell responses. Can function as costimulator and lower the threshold for T-cell activation and T-cell proliferation. Important for interactions between activated T-lymphocytes and endothelial cells. Mediates activation of NF-kappa-B. Triggers increased phosphorylation of STAT1 and up-regulates expression of VCAM1 and ICAM1. Promotes leukocyte adhesion to endothelial cells. Regulates migration of monocytes from the splenic reservoir to sites of inflammation. In Mus musculus (Mouse), this protein is Tumor necrosis factor ligand superfamily member 18 (Tnfsf18).